The chain runs to 605 residues: Aspartate--tRNA(Asp/Asn) ligase (605 aa).

Position 186 (E186) interacts with L-aspartate. The aspartate stretch occupies residues Q210–K213. L-aspartate-binding residues include R232 and H460. R232–E234 is a binding site for ATP. E494 contributes to the ATP binding site. R501 lines the L-aspartate pocket. G546–R549 contacts ATP.

The protein belongs to the class-II aminoacyl-tRNA synthetase family. Type 1 subfamily. As to quaternary structure, homodimer.

The protein localises to the cytoplasm. It carries out the reaction tRNA(Asx) + L-aspartate + ATP = L-aspartyl-tRNA(Asx) + AMP + diphosphate. Aspartyl-tRNA synthetase with relaxed tRNA specificity since it is able to aspartylate not only its cognate tRNA(Asp) but also tRNA(Asn). Reaction proceeds in two steps: L-aspartate is first activated by ATP to form Asp-AMP and then transferred to the acceptor end of tRNA(Asp/Asn). The polypeptide is Aspartate--tRNA(Asp/Asn) ligase (Chlorobium chlorochromatii (strain CaD3)).